The following is a 37-amino-acid chain: Large ribosomal subunit protein bL36 (37 aa).

It belongs to the bacterial ribosomal protein bL36 family.

The polypeptide is Large ribosomal subunit protein bL36 (Bacillus pumilus (strain SAFR-032)).